The chain runs to 77 residues: NAD(P)H-quinone oxidoreductase subunit L (77 aa).

2 helical membrane-spanning segments follow: residues 12–32 and 47–67; these read LIAY…LLFY and LGIY…SPFL.

The protein belongs to the complex I NdhL subunit family. NDH-1 can be composed of about 15 different subunits; different subcomplexes with different compositions have been identified which probably have different functions.

The protein localises to the cellular thylakoid membrane. The catalysed reaction is a plastoquinone + NADH + (n+1) H(+)(in) = a plastoquinol + NAD(+) + n H(+)(out). The enzyme catalyses a plastoquinone + NADPH + (n+1) H(+)(in) = a plastoquinol + NADP(+) + n H(+)(out). In terms of biological role, NDH-1 shuttles electrons from an unknown electron donor, via FMN and iron-sulfur (Fe-S) centers, to quinones in the respiratory and/or the photosynthetic chain. The immediate electron acceptor for the enzyme in this species is believed to be plastoquinone. Couples the redox reaction to proton translocation, and thus conserves the redox energy in a proton gradient. Cyanobacterial NDH-1 also plays a role in inorganic carbon-concentration. The sequence is that of NAD(P)H-quinone oxidoreductase subunit L from Prochlorococcus marinus (strain MIT 9312).